Consider the following 301-residue polypeptide: Phosphoglycolate phosphatase 2 (301 aa).

Catalysis depends on Asp-19, which acts as the Nucleophile.

This sequence belongs to the HAD-like hydrolase superfamily. CbbY/CbbZ/Gph/YieH family.

It catalyses the reaction 2-phosphoglycolate + H2O = glycolate + phosphate. In terms of biological role, dephosphorylates 2-phosphoglycolate, but does not contribute to photorespiratory metabolism. This chain is Phosphoglycolate phosphatase 2 (PGLP2), found in Arabidopsis thaliana (Mouse-ear cress).